A 138-amino-acid chain; its full sequence is Cysteine desulfuration protein SufE (138 aa).

Residue cysteine 51 is the Cysteine persulfide intermediate of the active site.

This sequence belongs to the SufE family. As to quaternary structure, homodimer. Interacts with SufS.

It localises to the cytoplasm. Its pathway is cofactor biosynthesis; iron-sulfur cluster biosynthesis. Its function is as follows. Participates in cysteine desulfuration mediated by SufS. Cysteine desulfuration mobilizes sulfur from L-cysteine to yield L-alanine and constitutes an essential step in sulfur metabolism for biosynthesis of a variety of sulfur-containing biomolecules. Functions as a sulfur acceptor for SufS, by mediating the direct transfer of the sulfur atom from the S-sulfanylcysteine of SufS, an intermediate product of cysteine desulfuration process. The chain is Cysteine desulfuration protein SufE from Escherichia coli O6:K15:H31 (strain 536 / UPEC).